Consider the following 660-residue polypeptide: tRNA 5-methylaminomethyl-2-thiouridine biosynthesis bifunctional protein MnmC (660 aa).

The tRNA (mnm(5)s(2)U34)-methyltransferase stretch occupies residues 1–242 (MTDRIVPATL…KRAMLVGEFA (242 aa)). The tract at residues 266 to 660 (IGAGLAGCAV…VRALRHGRVA (395 aa)) is FAD-dependent cmnm(5)s(2)U34 oxidoreductase.

In the N-terminal section; belongs to the methyltransferase superfamily. tRNA (mnm(5)s(2)U34)-methyltransferase family. The protein in the C-terminal section; belongs to the DAO family. FAD serves as cofactor.

It localises to the cytoplasm. It carries out the reaction 5-aminomethyl-2-thiouridine(34) in tRNA + S-adenosyl-L-methionine = 5-methylaminomethyl-2-thiouridine(34) in tRNA + S-adenosyl-L-homocysteine + H(+). Functionally, catalyzes the last two steps in the biosynthesis of 5-methylaminomethyl-2-thiouridine (mnm(5)s(2)U) at the wobble position (U34) in tRNA. Catalyzes the FAD-dependent demodification of cmnm(5)s(2)U34 to nm(5)s(2)U34, followed by the transfer of a methyl group from S-adenosyl-L-methionine to nm(5)s(2)U34, to form mnm(5)s(2)U34. The polypeptide is tRNA 5-methylaminomethyl-2-thiouridine biosynthesis bifunctional protein MnmC (Burkholderia pseudomallei (strain 1710b)).